The following is a 704-amino-acid chain: Elongation factor G 2 (704 aa).

The region spanning 8–290 (ERYRNIGISA…AIIDYLPSPV (283 aa)) is the tr-type G domain. GTP is bound by residues 17 to 24 (AHIDAGKT), 88 to 92 (DTPGH), and 142 to 145 (NKMD).

Belongs to the TRAFAC class translation factor GTPase superfamily. Classic translation factor GTPase family. EF-G/EF-2 subfamily.

The protein localises to the cytoplasm. Functionally, catalyzes the GTP-dependent ribosomal translocation step during translation elongation. During this step, the ribosome changes from the pre-translocational (PRE) to the post-translocational (POST) state as the newly formed A-site-bound peptidyl-tRNA and P-site-bound deacylated tRNA move to the P and E sites, respectively. Catalyzes the coordinated movement of the two tRNA molecules, the mRNA and conformational changes in the ribosome. This chain is Elongation factor G 2, found in Polaromonas sp. (strain JS666 / ATCC BAA-500).